The chain runs to 88 residues: Small ribosomal subunit protein uS17 (88 aa).

The protein belongs to the universal ribosomal protein uS17 family. Part of the 30S ribosomal subunit.

In terms of biological role, one of the primary rRNA binding proteins, it binds specifically to the 5'-end of 16S ribosomal RNA. The chain is Small ribosomal subunit protein uS17 from Oenococcus oeni (strain ATCC BAA-331 / PSU-1).